We begin with the raw amino-acid sequence, 157 residues long: SsrA-binding protein (157 aa).

Residues 130–157 (HDKRQDMAKKDSQRRIQKELGQRQKGME) form a disordered region. Residues 132–157 (KRQDMAKKDSQRRIQKELGQRQKGME) are compositionally biased toward basic and acidic residues.

This sequence belongs to the SmpB family.

Its subcellular location is the cytoplasm. In terms of biological role, required for rescue of stalled ribosomes mediated by trans-translation. Binds to transfer-messenger RNA (tmRNA), required for stable association of tmRNA with ribosomes. tmRNA and SmpB together mimic tRNA shape, replacing the anticodon stem-loop with SmpB. tmRNA is encoded by the ssrA gene; the 2 termini fold to resemble tRNA(Ala) and it encodes a 'tag peptide', a short internal open reading frame. During trans-translation Ala-aminoacylated tmRNA acts like a tRNA, entering the A-site of stalled ribosomes, displacing the stalled mRNA. The ribosome then switches to translate the ORF on the tmRNA; the nascent peptide is terminated with the 'tag peptide' encoded by the tmRNA and targeted for degradation. The ribosome is freed to recommence translation, which seems to be the essential function of trans-translation. The protein is SsrA-binding protein of Alkaliphilus metalliredigens (strain QYMF).